The following is a 432-amino-acid chain: MTQLEYALSGIVTKEMRIVAEYEGVDEEFILEGVKKGEIVIPSNINHKNLIPKGIGRGLSTKVNANIGTSDAYPEIEKEIEKLNVAVKAGADAVMDLSTGGDINQSRRKILENSPVPVGTVPMYQAAVESISKYGSIVAMPEEFIFEVIEEQAKDGVDFITVHCGLTFESLKKLKDNGRVMDIVSRGGSFTIAWMLHNDKENPLYKHFDRLLDIAKKYDITLSLGDGLRPGCLEDATDSAQIQELIILGELVKRARKAGVQVMVEGPGHVPIDQIEANVKLQKQLCHNAPFYVLGPIVTDIAPGYDHITSAIGGAIAAASGADFLCYVTPAEHLGLPDKEDVKEGVIAAKIAAHAADIAKGVKGAKEKDLTMARARKALNWDEQIKLSIDPDKAFKYRINKNISTAKTCSMCGKFCAMKIVSEYLGTSAMTC.

Residues N66, M95, Y124, H163, 185 to 187 (SRG), 226 to 229 (DGLR), and E265 contribute to the substrate site. Zn(2+) is bound at residue H269. A substrate-binding site is contributed by Y292. Residue H333 coordinates Zn(2+). The [4Fe-4S] cluster site is built by C409, C412, and C416.

This sequence belongs to the ThiC family. [4Fe-4S] cluster serves as cofactor.

It carries out the reaction 5-amino-1-(5-phospho-beta-D-ribosyl)imidazole + S-adenosyl-L-methionine = 4-amino-2-methyl-5-(phosphooxymethyl)pyrimidine + CO + 5'-deoxyadenosine + formate + L-methionine + 3 H(+). The protein operates within cofactor biosynthesis; thiamine diphosphate biosynthesis. Its function is as follows. Catalyzes the synthesis of the hydroxymethylpyrimidine phosphate (HMP-P) moiety of thiamine from aminoimidazole ribotide (AIR) in a radical S-adenosyl-L-methionine (SAM)-dependent reaction. This chain is Phosphomethylpyrimidine synthase, found in Thermoanaerobacter sp. (strain X514).